We begin with the raw amino-acid sequence, 630 residues long: Putative F-box/LRR-repeat protein At3g49150 (630 aa).

One can recognise an F-box domain in the interval 15-63 (KDIISDLPEALICHILSFLPIEDSALTSVLSKKWQHLFAFRPNLEFDDA). LRR repeat units follow at residues 101–129 (CRDF…DLRC), 152–178 (RIET…YLNK), 180–205 (LLRH…FIMN), 228–253 (CEDV…VYHD), 300–325 (ISNV…QIPV), 337–362 (DQKA…IFDG), 406–436 (CDDY…KLFY), 437–465 (DTQI…FNAR), and 567–590 (DSSI…GLNW).

In Arabidopsis thaliana (Mouse-ear cress), this protein is Putative F-box/LRR-repeat protein At3g49150.